The following is a 718-amino-acid chain: Polyribonucleotide nucleotidyltransferase (718 aa).

Residues D496 and D502 each contribute to the Mg(2+) site. A KH domain is found at 563 to 622 (PRLLTIKIDSDMIGLVIGPGGKTIKGITEETGAKIDIEDDGTVTISAVDENKAKRARNII). Positions 632-700 (GDVYAGRITR…NKGRINLTRL (69 aa)) constitute an S1 motif domain.

This sequence belongs to the polyribonucleotide nucleotidyltransferase family. Mg(2+) serves as cofactor.

The protein resides in the cytoplasm. The enzyme catalyses RNA(n+1) + phosphate = RNA(n) + a ribonucleoside 5'-diphosphate. Functionally, involved in mRNA degradation. Catalyzes the phosphorolysis of single-stranded polyribonucleotides processively in the 3'- to 5'-direction. The protein is Polyribonucleotide nucleotidyltransferase of Nostoc punctiforme (strain ATCC 29133 / PCC 73102).